Here is an 863-residue protein sequence, read N- to C-terminus: Scm-like with four MBT domains protein 1 (863 aa).

4 MBT repeats span residues 20 to 120 (FSWE…LEAP), 128 to 232 (SDWS…LQPP), 242 to 346 (ADWQ…INPP), and 354 to 451 (FDWA…LSTP). Residues 638 to 773 (KKKNKRIGRP…SDGENKPPSP (136 aa)) are disordered. A compositionally biased stretch (basic residues) spans 660-679 (KTSKRRKRRKNIFVHKKKRS). The span at 680–691 (SASVDNTPVGSP) shows a compositional bias: polar residues. Over residues 696-710 (GEDEDDADDGDDDSL) the composition is skewed to acidic residues. Residues Ser-764 and Ser-772 each carry the phosphoserine modification. Positions 793–861 (WSVADVVRFI…RIKFAFYEQF (69 aa)) constitute an SAM domain.

Interacts with MYOD1. Component of the SLC (SFMBT1-LSD1-CoREST) corepressor complex, which also contains KDM1A/LSD1 and RCOR1/CoREST. Interacts with KDM1A/LSD1 and RCOR1/CoREST. Interacts with MYOD1. Interacts with L3MBTL3. In terms of tissue distribution, highly expressed in the testis, low expression was detected in brain, kidney, heart and lung.

The protein resides in the nucleus. Its function is as follows. Histone-binding protein, which is part of various corepressor complexes. Mediates the recruitment of corepressor complexes to target genes, followed by chromatin compaction and repression of transcription. Plays a role during myogenesis: required for the maintenance of undifferentiated states of myogenic progenitor cells via interaction with MYOD1. Interaction with MYOD1 leads to the recruitment of associated corepressors and silencing of MYOD1 target genes. Part of the SLC complex in germ cells, where it may play a role during spermatogenesis. This Rattus norvegicus (Rat) protein is Scm-like with four MBT domains protein 1 (Sfmbt1).